The primary structure comprises 380 residues: Crotonobetainyl-CoA reductase (380 aa).

The protein belongs to the acyl-CoA dehydrogenase family. In terms of assembly, homotetramer. FAD serves as cofactor.

The protein resides in the cytoplasm. It carries out the reaction 4-(trimethylamino)butanoyl-CoA + oxidized [electron-transfer flavoprotein] + H(+) = crotonobetainyl-CoA + reduced [electron-transfer flavoprotein]. The protein operates within amine and polyamine metabolism; carnitine metabolism. Functionally, catalyzes the reduction of crotonobetainyl-CoA to gamma-butyrobetainyl-CoA. This is Crotonobetainyl-CoA reductase from Citrobacter koseri (strain ATCC BAA-895 / CDC 4225-83 / SGSC4696).